Reading from the N-terminus, the 369-residue chain is Chorismate synthase (369 aa).

NADP(+)-binding residues include R48 and R54. FMN contacts are provided by residues 125–127 (RSS), 238–239 (NA), G278, 293–297 (KPTSS), and R319.

Belongs to the chorismate synthase family. In terms of assembly, homotetramer. The cofactor is FMNH2.

The catalysed reaction is 5-O-(1-carboxyvinyl)-3-phosphoshikimate = chorismate + phosphate. It functions in the pathway metabolic intermediate biosynthesis; chorismate biosynthesis; chorismate from D-erythrose 4-phosphate and phosphoenolpyruvate: step 7/7. Catalyzes the anti-1,4-elimination of the C-3 phosphate and the C-6 proR hydrogen from 5-enolpyruvylshikimate-3-phosphate (EPSP) to yield chorismate, which is the branch point compound that serves as the starting substrate for the three terminal pathways of aromatic amino acid biosynthesis. This reaction introduces a second double bond into the aromatic ring system. This Burkholderia mallei (strain ATCC 23344) protein is Chorismate synthase.